We begin with the raw amino-acid sequence, 396 residues long: Elongation factor Tu (396 aa).

Residues 10-205 (KEHVNIGTIG…AVDNYIETPV (196 aa)) enclose the tr-type G domain. The G1 stretch occupies residues 19 to 26 (GHVDHGKT). 19–26 (GHVDHGKT) is a GTP binding site. T26 contacts Mg(2+). The interval 60 to 64 (GITIN) is G2. The G3 stretch occupies residues 81 to 84 (DCPG). GTP-binding positions include 81–85 (DCPGH) and 136–139 (NKVD). The G4 stretch occupies residues 136–139 (NKVD). The tract at residues 175-177 (SAL) is G5.

It belongs to the TRAFAC class translation factor GTPase superfamily. Classic translation factor GTPase family. EF-Tu/EF-1A subfamily. In terms of assembly, monomer.

It localises to the cytoplasm. It catalyses the reaction GTP + H2O = GDP + phosphate + H(+). In terms of biological role, GTP hydrolase that promotes the GTP-dependent binding of aminoacyl-tRNA to the A-site of ribosomes during protein biosynthesis. The protein is Elongation factor Tu of Mycoplasmopsis pulmonis (strain UAB CTIP) (Mycoplasma pulmonis).